A 331-amino-acid polypeptide reads, in one-letter code: Uroporphyrinogen decarboxylase (331 aa).

Residues 22–26, D71, Y145, S199, and H308 contribute to the substrate site; that span reads RQAGR.

It belongs to the uroporphyrinogen decarboxylase family. Homodimer.

The protein localises to the cytoplasm. It catalyses the reaction uroporphyrinogen III + 4 H(+) = coproporphyrinogen III + 4 CO2. It participates in porphyrin-containing compound metabolism; protoporphyrin-IX biosynthesis; coproporphyrinogen-III from 5-aminolevulinate: step 4/4. Functionally, catalyzes the decarboxylation of four acetate groups of uroporphyrinogen-III to yield coproporphyrinogen-III. The protein is Uroporphyrinogen decarboxylase of Picrophilus torridus (strain ATCC 700027 / DSM 9790 / JCM 10055 / NBRC 100828 / KAW 2/3).